Reading from the N-terminus, the 231-residue chain is UPF0702 transmembrane protein YetF (231 aa).

A run of 3 helical transmembrane segments spans residues 5 to 25, 33 to 53, and 59 to 79; these read LSVAVELVCGLGILFIILKLL, ITPFDFISALILGELVGNAVY, and IKEIIFASLLWGVLIYIIEFI.

This sequence belongs to the UPF0702 family.

The protein resides in the cell membrane. This is UPF0702 transmembrane protein YetF (yetF) from Bacillus subtilis (strain 168).